The following is a 514-amino-acid chain: Cytochrome P450 87A3 (514 aa).

Transmembrane regions (helical) follow at residues 36–56 (ASSM…VALL) and 315–335 (LMFV…TIGV). Cysteine 463 provides a ligand contact to heme.

It belongs to the cytochrome P450 family. Heme serves as cofactor. In terms of tissue distribution, expressed in roots and coleoptiles, but not in leaves.

The protein localises to the cytoplasmic vesicle membrane. This chain is Cytochrome P450 87A3 (CYP87A3), found in Oryza sativa subsp. japonica (Rice).